The following is a 287-amino-acid chain: Lipoyl synthase (287 aa).

Residues Cys38, Cys43, Cys49, Cys64, Cys68, Cys71, and Ser277 each contribute to the [4Fe-4S] cluster site. One can recognise a Radical SAM core domain in the interval 50 to 266; sequence WSRGTATFLL…KTVAESLGLR (217 aa).

This sequence belongs to the radical SAM superfamily. Lipoyl synthase family. [4Fe-4S] cluster serves as cofactor.

Its subcellular location is the cytoplasm. It carries out the reaction [[Fe-S] cluster scaffold protein carrying a second [4Fe-4S](2+) cluster] + N(6)-octanoyl-L-lysyl-[protein] + 2 oxidized [2Fe-2S]-[ferredoxin] + 2 S-adenosyl-L-methionine + 4 H(+) = [[Fe-S] cluster scaffold protein] + N(6)-[(R)-dihydrolipoyl]-L-lysyl-[protein] + 4 Fe(3+) + 2 hydrogen sulfide + 2 5'-deoxyadenosine + 2 L-methionine + 2 reduced [2Fe-2S]-[ferredoxin]. It functions in the pathway protein modification; protein lipoylation via endogenous pathway; protein N(6)-(lipoyl)lysine from octanoyl-[acyl-carrier-protein]: step 2/2. Its function is as follows. Catalyzes the radical-mediated insertion of two sulfur atoms into the C-6 and C-8 positions of the octanoyl moiety bound to the lipoyl domains of lipoate-dependent enzymes, thereby converting the octanoylated domains into lipoylated derivatives. In Chlorobium phaeobacteroides (strain DSM 266 / SMG 266 / 2430), this protein is Lipoyl synthase.